Reading from the N-terminus, the 463-residue chain is Hexokinase-7 (463 aa).

A Hexokinase domain is found at 7-456; it reads AAAEQVVAAL…SGLGAALIAA (450 aa). The hexokinase small subdomain stretch occupies residues 62–199; that stretch reads NGTEEGLFYA…GLDMRVSALI (138 aa). Residues glycine 76, threonine 77, and asparagine 78 each contribute to the ADP site. D-glucose is bound by residues threonine 165, lysine 166, asparagine 200, and aspartate 201. Residues 200 to 445 form a hexokinase large subdomain region; the sequence is NDTVGTLAAG…KSVAVKLAND (246 aa). Threonine 224 is an ADP binding site. Residues asparagine 227, glutamate 255, and glutamate 286 each contribute to the D-glucose site. An ADP-binding site is contributed by glycine 410.

It belongs to the hexokinase family. As to expression, expressed in roots, leaves, flowers, immature seeds and seed coat.

It is found in the cytoplasm. The enzyme catalyses a D-hexose + ATP = a D-hexose 6-phosphate + ADP + H(+). The catalysed reaction is D-fructose + ATP = D-fructose 6-phosphate + ADP + H(+). It catalyses the reaction D-glucose + ATP = D-glucose 6-phosphate + ADP + H(+). It participates in carbohydrate metabolism; hexose metabolism. The protein operates within carbohydrate degradation; glycolysis; D-glyceraldehyde 3-phosphate and glycerone phosphate from D-glucose: step 1/4. In terms of biological role, fructose and glucose phosphorylating enzyme. Functions in sugar signaling via a glycolysis-dependent manner under aerobic conditions, but its signaling role is suppressed when oxygen is deficient. The sequence is that of Hexokinase-7 (HXK7) from Oryza sativa subsp. japonica (Rice).